Reading from the N-terminus, the 293-residue chain is Ribosomal protein L11 methyltransferase (293 aa).

4 residues coordinate S-adenosyl-L-methionine: Thr-145, Gly-166, Asp-188, and Asn-230.

Belongs to the methyltransferase superfamily. PrmA family.

The protein localises to the cytoplasm. The catalysed reaction is L-lysyl-[protein] + 3 S-adenosyl-L-methionine = N(6),N(6),N(6)-trimethyl-L-lysyl-[protein] + 3 S-adenosyl-L-homocysteine + 3 H(+). In terms of biological role, methylates ribosomal protein L11. This Enterobacter sp. (strain 638) protein is Ribosomal protein L11 methyltransferase.